Consider the following 377-residue polypeptide: Queuine tRNA-ribosyltransferase (377 aa).

Asp-89 functions as the Proton acceptor in the catalytic mechanism. Substrate is bound by residues 89–93 (DSGGF), Asp-143, Gln-188, and Gly-215. The interval 246 to 252 (GVGKPED) is RNA binding. Asp-265 serves as the catalytic Nucleophile. Positions 270–274 (TRNAR) are RNA binding; important for wobble base 34 recognition. Cys-303, Cys-305, Cys-308, and His-334 together coordinate Zn(2+).

It belongs to the queuine tRNA-ribosyltransferase family. Homodimer. Within each dimer, one monomer is responsible for RNA recognition and catalysis, while the other monomer binds to the replacement base PreQ1. Zn(2+) serves as cofactor.

It carries out the reaction 7-aminomethyl-7-carbaguanine + guanosine(34) in tRNA = 7-aminomethyl-7-carbaguanosine(34) in tRNA + guanine. Its pathway is tRNA modification; tRNA-queuosine biosynthesis. Functionally, catalyzes the base-exchange of a guanine (G) residue with the queuine precursor 7-aminomethyl-7-deazaguanine (PreQ1) at position 34 (anticodon wobble position) in tRNAs with GU(N) anticodons (tRNA-Asp, -Asn, -His and -Tyr). Catalysis occurs through a double-displacement mechanism. The nucleophile active site attacks the C1' of nucleotide 34 to detach the guanine base from the RNA, forming a covalent enzyme-RNA intermediate. The proton acceptor active site deprotonates the incoming PreQ1, allowing a nucleophilic attack on the C1' of the ribose to form the product. After dissociation, two additional enzymatic reactions on the tRNA convert PreQ1 to queuine (Q), resulting in the hypermodified nucleoside queuosine (7-(((4,5-cis-dihydroxy-2-cyclopenten-1-yl)amino)methyl)-7-deazaguanosine). This chain is Queuine tRNA-ribosyltransferase, found in Acinetobacter baumannii (strain AB307-0294).